We begin with the raw amino-acid sequence, 1368 residues long: DNA-directed RNA polymerase subunit beta (1368 aa).

It belongs to the RNA polymerase beta chain family. In terms of assembly, the RNAP catalytic core consists of 2 alpha, 1 beta, 1 beta' and 1 omega subunit. When a sigma factor is associated with the core the holoenzyme is formed, which can initiate transcription.

The enzyme catalyses RNA(n) + a ribonucleoside 5'-triphosphate = RNA(n+1) + diphosphate. Functionally, DNA-dependent RNA polymerase catalyzes the transcription of DNA into RNA using the four ribonucleoside triphosphates as substrates. This is DNA-directed RNA polymerase subunit beta from Paraburkholderia xenovorans (strain LB400).